The primary structure comprises 243 residues: Adenylate dimethylallyltransferase (243 aa).

The enzyme catalyses dimethylallyl diphosphate + AMP = N(6)-(dimethylallyl)adenosine 5'-phosphate + diphosphate. In terms of biological role, transfers dimethylallyl groups to AMP as part of the biosynthesis of cytokinin phytohormones. This is Adenylate dimethylallyltransferase (tzs) from Agrobacterium fabrum (strain C58 / ATCC 33970) (Agrobacterium tumefaciens (strain C58)).